We begin with the raw amino-acid sequence, 289 residues long: 4-hydroxy-tetrahydrodipicolinate synthase (289 aa).

Thr-43 contributes to the pyruvate binding site. Tyr-131 functions as the Proton donor/acceptor in the catalytic mechanism. The Schiff-base intermediate with substrate role is filled by Lys-160. Residue Val-200 participates in pyruvate binding.

It belongs to the DapA family. As to quaternary structure, homotetramer; dimer of dimers.

It localises to the cytoplasm. It carries out the reaction L-aspartate 4-semialdehyde + pyruvate = (2S,4S)-4-hydroxy-2,3,4,5-tetrahydrodipicolinate + H2O + H(+). It functions in the pathway amino-acid biosynthesis; L-lysine biosynthesis via DAP pathway; (S)-tetrahydrodipicolinate from L-aspartate: step 3/4. In terms of biological role, catalyzes the condensation of (S)-aspartate-beta-semialdehyde [(S)-ASA] and pyruvate to 4-hydroxy-tetrahydrodipicolinate (HTPA). This Methanococcus maripaludis (strain DSM 14266 / JCM 13030 / NBRC 101832 / S2 / LL) protein is 4-hydroxy-tetrahydrodipicolinate synthase.